The primary structure comprises 526 residues: Na(+)/H(+) antiporter NhaB (526 aa).

12 consecutive transmembrane segments (helical) span residues 25–45, 52–72, 89–109, 130–164, 204–224, 242–262, 307–327, 350–370, 391–411, 448–468, 479–499, and 505–525; these read ILLF…IAGW, IFTL…LLAI, LVAN…IYFM, LSLA…FYAI, LMMH…VGEP, IRMS…CVLV, IALW…LIGL, QEAL…AVII, LALF…VFVG, VATP…LAPL, MALP…EMLL, and WFYQ…LPVL.

The protein belongs to the NhaB Na(+)/H(+) (TC 2.A.34) antiporter family.

It localises to the cell inner membrane. The catalysed reaction is 2 Na(+)(in) + 3 H(+)(out) = 2 Na(+)(out) + 3 H(+)(in). Na(+)/H(+) antiporter that extrudes sodium in exchange for external protons. The chain is Na(+)/H(+) antiporter NhaB from Aeromonas hydrophila subsp. hydrophila (strain ATCC 7966 / DSM 30187 / BCRC 13018 / CCUG 14551 / JCM 1027 / KCTC 2358 / NCIMB 9240 / NCTC 8049).